The primary structure comprises 130 residues: Small ribosomal subunit protein uS9 (130 aa).

The protein belongs to the universal ribosomal protein uS9 family.

The polypeptide is Small ribosomal subunit protein uS9 (Pseudoalteromonas atlantica (strain T6c / ATCC BAA-1087)).